Here is an 88-residue protein sequence, read N- to C-terminus: Small ribosomal subunit protein bS20 (88 aa).

Belongs to the bacterial ribosomal protein bS20 family.

Binds directly to 16S ribosomal RNA. The sequence is that of Small ribosomal subunit protein bS20 from Oenococcus oeni (strain ATCC BAA-331 / PSU-1).